Reading from the N-terminus, the 203-residue chain is Small ribosomal subunit protein uS10m (203 aa).

The transit peptide at 1 to 14 directs the protein to the mitochondrion; that stretch reads MLRNTIALRSFIRT. Residue S193 is modified to Phosphoserine.

It belongs to the universal ribosomal protein uS10 family. Component of the mitochondrial small ribosomal subunit (mt-SSU). Mature yeast 74S mitochondrial ribosomes consist of a small (37S) and a large (54S) subunit. The 37S small subunit contains a 15S ribosomal RNA (15S mt-rRNA) and 34 different proteins. The 54S large subunit contains a 21S rRNA (21S mt-rRNA) and 46 different proteins.

It localises to the mitochondrion. Functionally, component of the mitochondrial ribosome (mitoribosome), a dedicated translation machinery responsible for the synthesis of mitochondrial genome-encoded proteins, including at least some of the essential transmembrane subunits of the mitochondrial respiratory chain. The mitoribosomes are attached to the mitochondrial inner membrane and translation products are cotranslationally integrated into the membrane. The protein is Small ribosomal subunit protein uS10m (RSM10) of Saccharomyces cerevisiae (strain ATCC 204508 / S288c) (Baker's yeast).